Reading from the N-terminus, the 486-residue chain is Hydrogenobyrinate a,c-diamide synthase (486 aa).

Residues S254–L272 are compositionally biased toward pro residues. The interval S254 to D284 is disordered. Residues R289 to G474 enclose the GATase cobBQ-type domain. The Nucleophile role is filled by C372.

Belongs to the CobB/CbiA family. Requires Mg(2+) as cofactor.

The catalysed reaction is hydrogenobyrinate + 2 L-glutamine + 2 ATP + 2 H2O = hydrogenobyrinate a,c-diamide + 2 L-glutamate + 2 ADP + 2 phosphate + 2 H(+). Its pathway is cofactor biosynthesis; adenosylcobalamin biosynthesis; cob(II)yrinate a,c-diamide from precorrin-2 (aerobic route): step 9/10. Catalyzes the ATP-dependent amidation of the two carboxylate groups at positions a and c of hydrogenobyrinate, using either L-glutamine or ammonia as the nitrogen source. This Streptomyces coelicolor (strain ATCC BAA-471 / A3(2) / M145) protein is Hydrogenobyrinate a,c-diamide synthase.